The following is a 540-amino-acid chain: MPTINIYKWRLLNELKISETQLEDLLFNLKSEMKPIDQDHIEIEINNDRPDLLFVYGIIRSIKGLLKKELGEPRYSVKDTDYVFEIKEVPSRPYALAAVVEDIKFDDELLKELIQFQEKLHITVGRKRKKIAIGLHDLKKIDSKHIIYTTVNLDYKFIPLNSDKEMSVREILESTPQGKEYGNISLLDGKMPAIMQDDGQILSLPPVINSEKTRINSKTQSLFIDVTGTSLDTVIFTLDVIVTNLAEMGGKIGRIKVISPYVDNSPLLQHKSIKITAEYINKILGTNLNKNEIIEYLKMARFDVNDLGKEIEVIIPPYRNDILSQIDITEEVAITYGYNNLSPTPYKIEKIGSLSDRTKLIRVLRDLSVGGGFTEIFTFTLISESLLLGDFVKILNPITVDYNSVRNSLLPSILIFLSKNQHARMPIRVFEIGDVVIRNENTETGYSNKLNAAYAIMNSRVSFEELQAPLHEILNSLGINPIYKRDTNPLFIEGRTASIYANNKKIGIIGEINPNILEKIDIEYPIVMSEIYLDEIKDIL.

The 76-residue stretch at 268 to 343 (LQHKSIKITA…ITYGYNNLSP (76 aa)) folds into the B5 domain. Mg(2+)-binding residues include aspartate 321, aspartate 327, glutamate 330, and glutamate 331.

It belongs to the phenylalanyl-tRNA synthetase beta subunit family. Type 2 subfamily. As to quaternary structure, tetramer of two alpha and two beta subunits. Requires Mg(2+) as cofactor.

It is found in the cytoplasm. It carries out the reaction tRNA(Phe) + L-phenylalanine + ATP = L-phenylalanyl-tRNA(Phe) + AMP + diphosphate + H(+). This chain is Phenylalanine--tRNA ligase beta subunit, found in Sulfurisphaera tokodaii (strain DSM 16993 / JCM 10545 / NBRC 100140 / 7) (Sulfolobus tokodaii).